A 300-amino-acid chain; its full sequence is tRNA dimethylallyltransferase (300 aa).

11–18 (GPTAVGKS) lines the ATP pocket. Residue 13 to 18 (TAVGKS) participates in substrate binding. An interaction with substrate tRNA region spans residues 35 to 38 (DSIQ).

The protein belongs to the IPP transferase family. As to quaternary structure, monomer. The cofactor is Mg(2+).

It catalyses the reaction adenosine(37) in tRNA + dimethylallyl diphosphate = N(6)-dimethylallyladenosine(37) in tRNA + diphosphate. Its function is as follows. Catalyzes the transfer of a dimethylallyl group onto the adenine at position 37 in tRNAs that read codons beginning with uridine, leading to the formation of N6-(dimethylallyl)adenosine (i(6)A). In Borrelia recurrentis (strain A1), this protein is tRNA dimethylallyltransferase.